Consider the following 62-residue polypeptide: uncharacterized protein (62 aa).

This is an uncharacterized protein from Escherichia coli (Bacteriophage T4).